The following is a 363-amino-acid chain: Carbamoyl phosphate synthase small chain (363 aa).

The segment at 1 to 172 (MKAFLVLDNG…TKYIFGTHTG (172 aa)) is CPSase. The L-glutamine site is built by Ser45, Gly224, and Gly226. In terms of domain architecture, Glutamine amidotransferase type-1 spans 176 to 362 (KLAVYDYGVK…YDLVETTKRG (187 aa)). Catalysis depends on Cys252, which acts as the Nucleophile. Residues Leu253, Gln256, Asn294, Gly296, and Phe297 each contribute to the L-glutamine site. Residues His335 and Glu337 contribute to the active site.

Belongs to the CarA family. Composed of two chains; the small (or glutamine) chain promotes the hydrolysis of glutamine to ammonia, which is used by the large (or ammonia) chain to synthesize carbamoyl phosphate. Tetramer of heterodimers (alpha,beta)4.

It carries out the reaction hydrogencarbonate + L-glutamine + 2 ATP + H2O = carbamoyl phosphate + L-glutamate + 2 ADP + phosphate + 2 H(+). The catalysed reaction is L-glutamine + H2O = L-glutamate + NH4(+). It participates in amino-acid biosynthesis; L-arginine biosynthesis; carbamoyl phosphate from bicarbonate: step 1/1. It functions in the pathway pyrimidine metabolism; UMP biosynthesis via de novo pathway; (S)-dihydroorotate from bicarbonate: step 1/3. Its function is as follows. Small subunit of the glutamine-dependent carbamoyl phosphate synthetase (CPSase). CPSase catalyzes the formation of carbamoyl phosphate from the ammonia moiety of glutamine, carbonate, and phosphate donated by ATP, constituting the first step of 2 biosynthetic pathways, one leading to arginine and/or urea and the other to pyrimidine nucleotides. The small subunit (glutamine amidotransferase) binds and cleaves glutamine to supply the large subunit with the substrate ammonia. This is Carbamoyl phosphate synthase small chain from Leptospira borgpetersenii serovar Hardjo-bovis (strain L550).